The following is an 86-amino-acid chain: UPF0297 protein SH1302 (86 aa).

Belongs to the UPF0297 family.

This Staphylococcus haemolyticus (strain JCSC1435) protein is UPF0297 protein SH1302.